Reading from the N-terminus, the 213-residue chain is ATP-dependent dethiobiotin synthetase BioD (213 aa).

Position 12–17 (12–17 (EVGKTY)) interacts with ATP. Mg(2+) is bound at residue Thr-16. Lys-37 is an active-site residue. Residues Asp-46, 107-110 (EGVG), and 167-168 (NN) contribute to the ATP site. Residues Asp-46 and Glu-107 each coordinate Mg(2+).

It belongs to the dethiobiotin synthetase family. In terms of assembly, homodimer. Requires Mg(2+) as cofactor.

The protein resides in the cytoplasm. The catalysed reaction is (7R,8S)-7,8-diammoniononanoate + CO2 + ATP = (4R,5S)-dethiobiotin + ADP + phosphate + 3 H(+). The protein operates within cofactor biosynthesis; biotin biosynthesis; biotin from 7,8-diaminononanoate: step 1/2. Catalyzes a mechanistically unusual reaction, the ATP-dependent insertion of CO2 between the N7 and N8 nitrogen atoms of 7,8-diaminopelargonic acid (DAPA, also called 7,8-diammoniononanoate) to form a ureido ring. The protein is ATP-dependent dethiobiotin synthetase BioD of Akkermansia muciniphila (strain ATCC BAA-835 / DSM 22959 / JCM 33894 / BCRC 81048 / CCUG 64013 / CIP 107961 / Muc).